Here is a 466-residue protein sequence, read N- to C-terminus: Lipase 2 (466 aa).

Positions 1–16 (MKGLVFLLGLLPTIYA) are cleaved as a signal peptide. Cysteine 112 and cysteine 285 are oxidised to a cystine. Residue serine 196 is the Charge relay system of the active site. Residues asparagine 231, asparagine 319, and asparagine 331 are each glycosylated (N-linked (GlcNAc...) asparagine). Active-site charge relay system residues include aspartate 348 and histidine 381. Cysteine 364 and cysteine 409 are joined by a disulfide. Residues asparagine 422 and asparagine 451 are each glycosylated (N-linked (GlcNAc...) asparagine).

Belongs to the AB hydrolase superfamily. Lipase family. Class Lip subfamily.

It localises to the secreted. It carries out the reaction a triacylglycerol + H2O = a diacylglycerol + a fatty acid + H(+). In terms of biological role, secreted lipase that is able to hydrolyze both the neutral triacylglycerols and the monopalmitate ester Tween 40, allowing the use of hydrolyzed products as carbon sources. Has broad lipolytic activity, which may be important for colonization and subsequent infection, therefore contributing to the persistence and virulence in human tissue. My be important for alimentary tract colonization, but not oral infection. Facilitates invasive disease via lipid-based suppression of the IL-17 response. Inhibits IL-17 production indirectly by suppressing IL-23 production by tissue-resident dendritic cells. The protein is Lipase 2 of Candida albicans (strain SC5314 / ATCC MYA-2876) (Yeast).